The following is a 629-amino-acid chain: Ionotropic receptor 75a (629 aa).

The Extracellular portion of the chain corresponds to 1 to 335 (MQLVQLANFV…GDVFLQPFSP (335 aa)). 6 N-linked (GlcNAc...) asparagine glycosylation sites follow: Asn-61, Asn-112, Asn-126, Asn-144, Asn-166, and Asn-232. The chain crosses the membrane as a helical span at residues 336 to 356 (LVWYLFGGVLSLIGVLLWITF). At 357–374 (YMECKRMQKRWRLDYLPS) the chain is on the cytoplasmic side. Residues 375–395 (LLSTFLISFGAACIQSSSLIP) form a helical membrane-spanning segment. At 396–402 (RSAGGRL) the chain is on the extracellular side. A helical membrane pass occupies residues 403–423 (IYFALFLISFIMYNYYTSVVV). Topologically, residues 424–592 (SSLLSSPVKS…NFVITVGMEY (169 aa)) are cytoplasmic. The helical transmembrane segment at 593 to 613 (VAPLLLMLICADILVVVILLV) threads the bilayer. At 614–629 (ELAWKRFFTRPLTIHP) the chain is on the extracellular side.

It belongs to the glutamate-gated ion channel (TC 1.A.10.1) family. In terms of tissue distribution, expressed in neurons in the antennal coeloconic 2 (ac2) sensillum class of sensory hairs (at protein level).

The protein resides in the cell membrane. It is found in the cell projection. Its subcellular location is the dendrite. Olfactory receptor for propionic, butyric and 2-oxopentanoic acids. This is Ionotropic receptor 75a from Drosophila sechellia (Fruit fly).